Here is a 340-residue protein sequence, read N- to C-terminus: Putative D-lactate dehydrogenase (340 aa).

NAD(+) is bound by residues 153–154 (NI), aspartate 174, 206–207 (TP), 233–235 (VSR), and aspartate 259. Arginine 235 is a catalytic residue. Residue glutamate 264 is part of the active site. The active-site Proton donor is histidine 296.

It belongs to the D-isomer specific 2-hydroxyacid dehydrogenase family.

It carries out the reaction (R)-lactate + NAD(+) = pyruvate + NADH + H(+). The protein is Putative D-lactate dehydrogenase (ldhA) of Dictyostelium discoideum (Social amoeba).